The sequence spans 217 residues: Glycosylphosphatidylinositol anchor biosynthesis protein 11 (217 aa).

The next 2 membrane-spanning stretches (helical) occupy residues 45-65 and 68-88; these read TWLTIPWHLIALVYIYVKVFN and NTAELLACLVPLQILYTIFQF. An N-linked (GlcNAc...) asparagine glycan is attached at N102. Transmembrane regions (helical) follow at residues 107–127, 134–154, 169–189, and 197–217; these read AISILACIVLSIPVVVIIILF, LLWETWLLALHCSFLAYPAVY, YFILIVVGCWISCVVIPLDWD, and IPIVIGAYLGAFVGFAYGAYL.

The protein belongs to the PIGF family.

Its subcellular location is the endoplasmic reticulum membrane. Its pathway is glycolipid biosynthesis; glycosylphosphatidylinositol-anchor biosynthesis. In terms of biological role, acts in the GPI biosynthetic pathway between GlcNAc-PI synthesis and GPI transfer to protein. This is Glycosylphosphatidylinositol anchor biosynthesis protein 11 (GPI11) from Candida glabrata (strain ATCC 2001 / BCRC 20586 / JCM 3761 / NBRC 0622 / NRRL Y-65 / CBS 138) (Yeast).